The following is a 336-amino-acid chain: Cytoskeleton protein RodZ (336 aa).

The Cytoplasmic portion of the chain corresponds to 1–111 (MNTEATHDQN…LGKRRKKRDG (111 aa)). The region spanning 19 to 71 (LRNAREQLGLSQQAVAERLCLKVSTVRDIEEDKAPSDLASTFLRGYIRSYARL) is the HTH cro/C1-type domain. The segment at residues 30 to 49 (QQAVAERLCLKVSTVRDIEE) is a DNA-binding region (H-T-H motif). The helical; Signal-anchor for type II membrane protein transmembrane segment at 112 to 132 (WLMSFTWLVLFVVVGLTGAWW) threads the bilayer. At 133-336 (WQNHKAQQEE…TLNAEPTPAQ (204 aa)) the chain is on the periplasmic side. The tract at residues 155 to 243 (NADKDSGQSV…PSALPTSQAG (89 aa)) is disordered. The segment covering 161–175 (GQSVPLDTGAVTSQD) has biased composition (polar residues). Low complexity-rich tracts occupy residues 176 to 214 (TTPA…VVAP) and 221 to 243 (TAAT…SQAG).

Belongs to the RodZ family.

It localises to the cell inner membrane. Functionally, cytoskeletal protein that is involved in cell-shape control through regulation of the length of the long axis. The sequence is that of Cytoskeleton protein RodZ from Salmonella newport (strain SL254).